The primary structure comprises 189 residues: Lumazine protein (189 aa).

Lumazine-binding repeat units lie at residues 1–96 and 97–189; these read MFKG…LGKG and ALTG…SNEW.

It depends on 6,7-dimethyl-8-(1-D-ribityl)lumazine as a cofactor.

Antenna protein that modulates the color of the bioluminescence emission of the luciferase. In the presence of LumP, luciferase emission is shifted to higher energy values (shorter wavelength). This Photobacterium phosphoreum protein is Lumazine protein (luxL).